Consider the following 519-residue polypeptide: Cyclic AMP-responsive element-binding protein 3-like protein 2 (519 aa).

Over 1–374 (MEIMDSGEPF…SCRVTGTQTS (374 aa)) the chain is Cytoplasmic. Disordered stretches follow at residues 58–77 (GRGDAMDTEEELTRASPVPP), 85–121 (YSLCGDSRPQSPLSHLPGEPGSDAADSESDEWPMEQE), and 193–261 (GLEC…SGPL). A compositionally biased stretch (acidic residues) spans 109 to 119 (ADSESDEWPME). Composition is skewed to low complexity over residues 205-217 (SSVGSDSEGSQSP) and 240-249 (PSSLSSSPLL). One can recognise a bZIP domain in the interval 291-354 (ALKKIRRKIK…KSLLQQLHSL (64 aa)). Residues 293–322 (KKIRRKIKNKISAQESRRKKKEYVDALEKK) form a basic motif region. Residues 333–354 (LRRKVENLECTNKSLLQQLHSL) form a leucine-zipper region. Residues 375 to 395 (TCLMVVVLCFSLFLGSFYPGL) form a helical; Signal-anchor for type II membrane protein membrane-spanning segment. Residues 396-519 (SPCSSITKAD…QLDRTVNETS (124 aa)) are Lumenal-facing. An S1P recognition motif is present at residues 423 to 426 (RSLL). N-linked (GlcNAc...) asparagine glycans are attached at residues N485, N503, and N516.

This sequence belongs to the bZIP family. ATF subfamily. In terms of assembly, binds DNA as a dimer. In terms of processing, upon ER stress, translocated to the Golgi apparatus, where it is processed by regulated intramembrane proteolysis (RIP) to release the cytosol-facing N-terminal transcription factor domain. The cleavage is performed sequentially by site-1 and site-2 proteases (S1P/mbtps1 and S2P/mbtps2).

Its subcellular location is the endoplasmic reticulum membrane. It localises to the nucleus. Functionally, transcription factor involved in unfolded protein response (UPR). In the absence of endoplasmic reticulum (ER) stress, inserted into ER membranes, with N-terminal DNA-binding and transcription activation domains oriented toward the cytosolic face of the membrane. In response to ER stress, transported to the Golgi, where it is cleaved in a site-specific manner by resident proteases S1P/mbtps1 and S2P/mbtps2. The released N-terminal cytosolic domain is translocated to the nucleus to effect transcription of specific target genes. Plays a critical role in chondrogenesis. May protect neuroblastoma cells from ER stress-induced death. In vitro activates transcription of target genes via direct binding to the CRE site. The sequence is that of Cyclic AMP-responsive element-binding protein 3-like protein 2 (creb3l2) from Danio rerio (Zebrafish).